The following is a 125-amino-acid chain: Large ribosomal subunit protein bL12 (125 aa).

The protein belongs to the bacterial ribosomal protein bL12 family. As to quaternary structure, homodimer. Part of the ribosomal stalk of the 50S ribosomal subunit. Forms a multimeric L10(L12)X complex, where L10 forms an elongated spine to which 2 to 4 L12 dimers bind in a sequential fashion. Binds GTP-bound translation factors.

Forms part of the ribosomal stalk which helps the ribosome interact with GTP-bound translation factors. Is thus essential for accurate translation. The polypeptide is Large ribosomal subunit protein bL12 (Mannheimia succiniciproducens (strain KCTC 0769BP / MBEL55E)).